We begin with the raw amino-acid sequence, 357 residues long: CRISPR system Cms protein Csm5 (357 aa).

It belongs to the CRISPR-associated Csm5 family. In terms of assembly, part of the Csm effector complex that includes at least Cas10(1), Csm2(3), Csm3(5), Csm4(1), Csm5(1) and mature crRNA. The Csm complex is elongated and slightly twisted with a maximal length of 215 Angstroms and a diameter of 75-80 Angstroms. It has been modeled to have a central protein filamant of Csm3 subunits along which the dsRNA helix of paired crRNA and target RNA binds. The filament is capped at one end by Cas10 and Csm4 and at the other end by Csm5; ssDNA is thought to bind to the N-terminal HD domain of Cas10. Csm with a precursor crRNA does not include Csm5, while Cas6, the enzyme probably involved in pre-crRNA processing, is found associated with a subset of the Csm complex.

In terms of biological role, CRISPR (clustered regularly interspaced short palindromic repeat) is an adaptive immune system that provides protection against mobile genetic elements (viruses, transposable elements and conjugative plasmids). CRISPR clusters contain spacers, sequences complementary to antecedent mobile elements, and target invading nucleic acids. CRISPR clusters are transcribed and processed into CRISPR RNA (crRNA). The type III-A Csm effector complex binds crRNA and acts as a crRNA-guided RNase, DNase and cyclic oligoadenylate synthase; binding of target RNA cognate to the crRNA is required for all activities. In a heterologous host this Csm effector complex restricts ssRNA phage MS2, suggesting it may target RNA viruses in vivo. Its function is as follows. Csm functions as a non-specific ssDNase. Base-pairing between crRNA and target RNA to form a ternary Csm complex activates a ssDNase activity; target RNA cleavage suppresses the ssDNase, a temporal control that prevents uncontrolled DNA degradation. Viral RNA transcripts probably tether the Csm complex to the viral genome, recruiting Cas10 ssDNA activity which is able to degrade DNA in the transcription bubble, spatially controlling the DNase activity. Functionally, this subunit might be involved in maturation of a crRNA intermediate to its mature form. The polypeptide is CRISPR system Cms protein Csm5 (Streptococcus thermophilus).